Consider the following 221-residue polypeptide: Thiamine-phosphate synthase (221 aa).

4-amino-2-methyl-5-(diphosphooxymethyl)pyrimidine is bound by residues 41–45 (QLRDK) and Asn-82. Mg(2+) is bound by residues Asp-83 and Asp-102. Ser-120 provides a ligand contact to 4-amino-2-methyl-5-(diphosphooxymethyl)pyrimidine. 146–148 (TPT) serves as a coordination point for 2-[(2R,5Z)-2-carboxy-4-methylthiazol-5(2H)-ylidene]ethyl phosphate. Lys-149 lines the 4-amino-2-methyl-5-(diphosphooxymethyl)pyrimidine pocket. Position 177 (Gly-177) interacts with 2-[(2R,5Z)-2-carboxy-4-methylthiazol-5(2H)-ylidene]ethyl phosphate.

This sequence belongs to the thiamine-phosphate synthase family. It depends on Mg(2+) as a cofactor.

The enzyme catalyses 2-[(2R,5Z)-2-carboxy-4-methylthiazol-5(2H)-ylidene]ethyl phosphate + 4-amino-2-methyl-5-(diphosphooxymethyl)pyrimidine + 2 H(+) = thiamine phosphate + CO2 + diphosphate. The catalysed reaction is 2-(2-carboxy-4-methylthiazol-5-yl)ethyl phosphate + 4-amino-2-methyl-5-(diphosphooxymethyl)pyrimidine + 2 H(+) = thiamine phosphate + CO2 + diphosphate. It carries out the reaction 4-methyl-5-(2-phosphooxyethyl)-thiazole + 4-amino-2-methyl-5-(diphosphooxymethyl)pyrimidine + H(+) = thiamine phosphate + diphosphate. The protein operates within cofactor biosynthesis; thiamine diphosphate biosynthesis; thiamine phosphate from 4-amino-2-methyl-5-diphosphomethylpyrimidine and 4-methyl-5-(2-phosphoethyl)-thiazole: step 1/1. Its function is as follows. Condenses 4-methyl-5-(beta-hydroxyethyl)thiazole monophosphate (THZ-P) and 2-methyl-4-amino-5-hydroxymethyl pyrimidine pyrophosphate (HMP-PP) to form thiamine monophosphate (TMP). The sequence is that of Thiamine-phosphate synthase from Mycolicibacterium vanbaalenii (strain DSM 7251 / JCM 13017 / BCRC 16820 / KCTC 9966 / NRRL B-24157 / PYR-1) (Mycobacterium vanbaalenii).